The primary structure comprises 194 residues: BCL2/adenovirus E1B 19 kDa protein-interacting protein 3 (194 aa).

The segment at 1–102 is disordered; that stretch reads MSQNGAPGMQ…SQSEEDDIER (102 aa). Basic and acidic residues predominate over residues 42–55; that stretch reads DMEKILLDAQHESG. Phosphoserine occurs at positions 54, 66, 86, 92, and 95. The span at 56–69 shows a compositional bias: low complexity; the sequence is RSSSKSSHCDSPPR. Positions 78–88 are enriched in basic and acidic residues; sequence RASETDTHSIG. Positions 100–125 match the BH3 motif; the sequence is IERRKEVESILKKNSDWIWDWSSRPE. The helical transmembrane segment at 164 to 184 threads the bilayer; it reads VFLPSLLLSHLLAIGLGIYIG.

The protein belongs to the NIP3 family. As to quaternary structure, homodimer. Binds to BCL2. Interacts with BNIP3L and ACAA2. Interacts (via BH3 domain) with SPATA18 (via coiled-coil domains). Interacts with BOK; promotes BOK oligomerization. Interacts with PPTC7; this interaction promotes BNIP3 degradation. In terms of assembly, (Microbial infection) Interacts with adenovirus E1B 19 kDa protein. (Microbial infection) Interacts with Epstein-Barr virus BHRF1.

Its subcellular location is the mitochondrion. It localises to the mitochondrion outer membrane. In terms of biological role, apoptosis-inducing protein that can overcome BCL2 suppression. May play a role in repartitioning calcium between the two major intracellular calcium stores in association with BCL2. Involved in mitochondrial quality control via its interaction with SPATA18/MIEAP: in response to mitochondrial damage, participates in mitochondrial protein catabolic process (also named MALM) leading to the degradation of damaged proteins inside mitochondria. The physical interaction of SPATA18/MIEAP, BNIP3 and BNIP3L/NIX at the mitochondrial outer membrane regulates the opening of a pore in the mitochondrial double membrane in order to mediate the translocation of lysosomal proteins from the cytoplasm to the mitochondrial matrix. Plays an important role in the calprotectin (S100A8/A9)-induced cell death pathway. This is BCL2/adenovirus E1B 19 kDa protein-interacting protein 3 from Homo sapiens (Human).